The sequence spans 189 residues: UPF0251 protein MTH_1178 (189 aa).

The protein belongs to the UPF0251 family.

The chain is UPF0251 protein MTH_1178 from Methanothermobacter thermautotrophicus (strain ATCC 29096 / DSM 1053 / JCM 10044 / NBRC 100330 / Delta H) (Methanobacterium thermoautotrophicum).